The sequence spans 499 residues: Pyruvate kinase 1 (499 aa).

Residue Arg-50 participates in substrate binding. K(+)-binding residues include Asn-52, Ser-54, Asp-84, and Thr-85. 52–55 (NFSH) lines the ATP pocket. ATP is bound at residue Arg-91. Glu-241 provides a ligand contact to Mg(2+). Residues Gly-264, Asp-265, and Thr-297 each contribute to the substrate site. Asp-265 lines the Mg(2+) pocket.

This sequence belongs to the pyruvate kinase family. Homotetramer. Requires Mg(2+) as cofactor. K(+) is required as a cofactor.

It catalyses the reaction pyruvate + ATP = phosphoenolpyruvate + ADP + H(+). It functions in the pathway carbohydrate degradation; glycolysis; pyruvate from D-glyceraldehyde 3-phosphate: step 5/5. Its activity is regulated as follows. Activated by fructose 2,6-bisphosphate, activated by the effector in a cooperative manner. This Trypanosoma brucei brucei protein is Pyruvate kinase 1 (PYK1).